We begin with the raw amino-acid sequence, 317 residues long: Anamorsin homolog 2 (317 aa).

Positions 1–162 (MAKKVGVLLF…KPSWDSASVF (162 aa)) are N-terminal SAM-like domain. The tract at residues 163–229 (QLRKGSSQKG…EDDLLTEEDL (67 aa)) is linker. 4 residues coordinate [2Fe-2S] cluster: cysteine 240, cysteine 247, cysteine 250, and cysteine 252. The tract at residues 240–252 (CAPTKKACKNCTC) is fe-S binding site A. [4Fe-4S] cluster-binding residues include cysteine 278, cysteine 281, cysteine 289, and cysteine 292. 2 short sequence motifs (cx2C motif) span residues 278 to 281 (CGSC) and 289 to 292 (CAGC). Residues 278–292 (CGSCGLGDAFRCAGC) form a fe-S binding site B region.

It belongs to the anamorsin family. In terms of assembly, monomer. [2Fe-2S] cluster serves as cofactor. The cofactor is [4Fe-4S] cluster.

It is found in the cytoplasm. The protein resides in the mitochondrion intermembrane space. Its function is as follows. Component of the cytosolic iron-sulfur (Fe-S) protein assembly (CIA) machinery. Required for the maturation of extramitochondrial Fe-S proteins. Part of an electron transfer chain functioning in an early step of cytosolic Fe-S biogenesis, facilitating the de novo assembly of a [4Fe-4S] cluster on the cytosolic Fe-S scaffold complex. Electrons are transferred from NADPH via a FAD- and FMN-containing diflavin oxidoreductase. Together with the diflavin oxidoreductase, also required for the assembly of the diferric tyrosyl radical cofactor of ribonucleotide reductase (RNR), probably by providing electrons for reduction during radical cofactor maturation in the catalytic small subunit. The polypeptide is Anamorsin homolog 2 (Physcomitrium patens (Spreading-leaved earth moss)).